The sequence spans 196 residues: Phosphoheptose isomerase (196 aa).

The SIS domain maps to 36–196; it reads MTNCLINGGK…GIDALLLGVE (161 aa). 51–53 is a binding site for substrate; it reads NGG. The Zn(2+) site is built by histidine 60 and glutamate 64. Residues glutamate 64, 93–94, 119–121, serine 124, and glutamine 174 contribute to the substrate site; these read ND and STS. Residues glutamine 174 and histidine 182 each coordinate Zn(2+).

It belongs to the SIS family. GmhA subfamily. As to quaternary structure, homotetramer. It depends on Zn(2+) as a cofactor.

The protein localises to the cytoplasm. It carries out the reaction 2 D-sedoheptulose 7-phosphate = D-glycero-alpha-D-manno-heptose 7-phosphate + D-glycero-beta-D-manno-heptose 7-phosphate. The protein operates within carbohydrate biosynthesis; D-glycero-D-manno-heptose 7-phosphate biosynthesis; D-glycero-alpha-D-manno-heptose 7-phosphate and D-glycero-beta-D-manno-heptose 7-phosphate from sedoheptulose 7-phosphate: step 1/1. Its function is as follows. Catalyzes the isomerization of sedoheptulose 7-phosphate in D-glycero-D-manno-heptose 7-phosphate. This is Phosphoheptose isomerase from Dechloromonas aromatica (strain RCB).